The following is a 304-amino-acid chain: MPPVPLLTAPTAAGKSALALALGRQFGLEVIAADAFTVYRGLDIGTAKPTPAERAQVPHHLLDVVDVTEDYDVARYTRAAESAIADVLARGRVPLVVGGTGFYLSALVRGLPLTPPADPQMRAEVEADLAARGLDALLAEVAAANPAEAVRLERNPRRVVRALEVYRRTGRFPGEFGYRPPAFRYRMFAFTHPWPELEARVAARTRTMLAQGWPEEAAWLAQQVAPDQEPRPTVWQALGYREALAVHAGTLDPEAAARQITLATRQYAKRQLTWVRTQLGTSPVTPSQAAEALVAFLSGGGLSA.

9 to 16 (APTAAGKS) lines the ATP pocket. 11–16 (TAAGKS) provides a ligand contact to substrate.

The protein belongs to the IPP transferase family. As to quaternary structure, monomer. Mg(2+) is required as a cofactor.

The enzyme catalyses adenosine(37) in tRNA + dimethylallyl diphosphate = N(6)-dimethylallyladenosine(37) in tRNA + diphosphate. In terms of biological role, catalyzes the transfer of a dimethylallyl group onto the adenine at position 37 in tRNAs that read codons beginning with uridine, leading to the formation of N6-(dimethylallyl)adenosine (i(6)A). This is tRNA dimethylallyltransferase from Deinococcus geothermalis (strain DSM 11300 / CIP 105573 / AG-3a).